The chain runs to 292 residues: NAD kinase (292 aa).

D72 (proton acceptor) is an active-site residue. Residues 72–73 (DG), 146–147 (NE), H157, R174, D176, and 187–192 (TAYSLS) each bind NAD(+).

The protein belongs to the NAD kinase family. Requires a divalent metal cation as cofactor.

It localises to the cytoplasm. It catalyses the reaction NAD(+) + ATP = ADP + NADP(+) + H(+). Involved in the regulation of the intracellular balance of NAD and NADP, and is a key enzyme in the biosynthesis of NADP. Catalyzes specifically the phosphorylation on 2'-hydroxyl of the adenosine moiety of NAD to yield NADP. The protein is NAD kinase of Shewanella woodyi (strain ATCC 51908 / MS32).